A 215-amino-acid polypeptide reads, in one-letter code: Nascent polypeptide-associated complex subunit alpha (215 aa).

The interval 1-81 (MPGEATETVP…SEKKARKAMS (81 aa)) is disordered. The span at 9-28 (VPATEQELPQPQAETGSGTE) shows a compositional bias: polar residues. Acidic residues predominate over residues 29–42 (SDSDESVPELEEQD). Ser43 bears the Phosphoserine; by ILK1 mark. Residues 44-57 (TQATTQQAQLAAAA) show a composition bias toward low complexity. The tract at residues 69 to 80 (QSRSEKKARKAM) is required for DNA-binding. An NAC-A/B domain is found at 70-135 (SRSEKKARKA…AKIEDLSQQA (66 aa)). The tract at residues 93–108 (RVTIRKSKNILFVITK) is RNA/DNA-binding. Residue Ser132 is modified to Phosphoserine. Lys142 carries the post-translational modification N6-acetyllysine; alternate. Lys142 is covalently cross-linked (Glycyl lysine isopeptide (Lys-Gly) (interchain with G-Cter in SUMO2); alternate). Thr159 carries the phosphothreonine; by GSK3-beta modification. At Thr161 the chain carries Phosphothreonine. Residues Ser166, Ser186, Ser191, and Ser203 each carry the phosphoserine modification. Positions 176 to 213 (VEVKDIELVMSQANVSRAKAVRALKNNSNDIVNAIMEL) constitute a UBA domain.

Belongs to the NAC-alpha family. Interacts with TBP and JUN. Part of the nascent polypeptide-associated complex (NAC), which is a heterodimer of NACA and BTF3 (via NAC-A/B domains). NAC associates with ribosomes through the BTF3/NACB subunit and contacts the ribosomal protein L23, which is positioned near the exiting site. Both subunits can contact nascent polypeptide chains. NACA may also form homodimers, and only this form binds DNA. In terms of processing, phosphorylation of Thr-159 by GSK3B may promote proteasome mediated degradation. Phosphorylation of Ser-43 by ILK during cell adhesion may promote nuclear localization. As to expression, ubiquitously expressed.

It is found in the cytoplasm. It localises to the nucleus. Its function is as follows. Prevents inappropriate targeting of non-secretory polypeptides to the endoplasmic reticulum (ER). Binds to nascent polypeptide chains as they emerge from the ribosome and blocks their interaction with the signal recognition particle (SRP), which normally targets nascent secretory peptides to the ER. Also reduces the inherent affinity of ribosomes for protein translocation sites in the ER membrane (M sites). May act as a specific coactivator for JUN, binding to DNA and stabilizing the interaction of JUN homodimers with target gene promoters. The protein is Nascent polypeptide-associated complex subunit alpha (NACA) of Homo sapiens (Human).